A 580-amino-acid polypeptide reads, in one-letter code: Extracellular protease (580 aa).

The signal sequence occupies residues 1–32; it reads MSTASLRKRTGSLTILGASALTSLLLAMPAFA. Residues 33–136 constitute a propeptide that is removed on maturation; the sequence is GEVYLDGLAT…VEVDQILHAT (104 aa). The Peptidase S8 domain maps to 147-465; that stretch reads QWAFGTTNAG…AGIVNADAAV (319 aa). Active-site charge relay system residues include Asp177 and His237. 2 disulfides stabilise this stretch: Cys225-Cys273 and Cys315-Cys352. Ser409 acts as the Charge relay system in catalysis. Cysteines 450 and 454 form a disulfide.

The protein belongs to the peptidase S8 family.

Its subcellular location is the secreted. The protein is Extracellular protease of Xanthomonas campestris pv. campestris (strain ATCC 33913 / DSM 3586 / NCPPB 528 / LMG 568 / P 25).